The following is a 121-amino-acid chain: Large ribosomal subunit protein eL31 (121 aa).

The protein belongs to the eukaryotic ribosomal protein eL31 family.

The polypeptide is Large ribosomal subunit protein eL31 (RPL31) (Panax ginseng (Korean ginseng)).